Consider the following 310-residue polypeptide: Probable manganese-dependent inorganic pyrophosphatase (310 aa).

Mn(2+) contacts are provided by histidine 9, aspartate 13, aspartate 15, aspartate 75, histidine 97, and aspartate 149.

The protein belongs to the PPase class C family. The cofactor is Mn(2+).

Its subcellular location is the cytoplasm. It catalyses the reaction diphosphate + H2O = 2 phosphate + H(+). This chain is Probable manganese-dependent inorganic pyrophosphatase, found in Bacillus cytotoxicus (strain DSM 22905 / CIP 110041 / 391-98 / NVH 391-98).